The following is a 142-amino-acid chain: Putative pre-16S rRNA nuclease (142 aa).

The protein belongs to the YqgF nuclease family.

It localises to the cytoplasm. Its function is as follows. Could be a nuclease involved in processing of the 5'-end of pre-16S rRNA. In Shouchella clausii (strain KSM-K16) (Alkalihalobacillus clausii), this protein is Putative pre-16S rRNA nuclease.